A 328-amino-acid polypeptide reads, in one-letter code: Ferredoxin--NADP reductase 2 (328 aa).

Positions 16, 35, 43, 48, 88, 123, 284, and 325 each coordinate FAD.

This sequence belongs to the ferredoxin--NADP reductase type 2 family. In terms of assembly, homodimer. FAD serves as cofactor.

It catalyses the reaction 2 reduced [2Fe-2S]-[ferredoxin] + NADP(+) + H(+) = 2 oxidized [2Fe-2S]-[ferredoxin] + NADPH. This is Ferredoxin--NADP reductase 2 from Oceanobacillus iheyensis (strain DSM 14371 / CIP 107618 / JCM 11309 / KCTC 3954 / HTE831).